A 147-amino-acid chain; its full sequence is Large ribosomal subunit protein bL9 (147 aa).

The protein belongs to the bacterial ribosomal protein bL9 family.

Functionally, binds to the 23S rRNA. The sequence is that of Large ribosomal subunit protein bL9 from Trichlorobacter lovleyi (strain ATCC BAA-1151 / DSM 17278 / SZ) (Geobacter lovleyi).